The chain runs to 365 residues: Succinyl-diaminopimelate desuccinylase (365 aa).

Residue His-64 coordinates Zn(2+). Asp-66 is an active-site residue. Zn(2+) is bound at residue Asp-95. Glu-125 functions as the Proton acceptor in the catalytic mechanism. Zn(2+)-binding residues include Glu-126, Glu-154, and His-339.

This sequence belongs to the peptidase M20A family. DapE subfamily. Homodimer. It depends on Zn(2+) as a cofactor. The cofactor is Co(2+).

The enzyme catalyses N-succinyl-(2S,6S)-2,6-diaminopimelate + H2O = (2S,6S)-2,6-diaminopimelate + succinate. It participates in amino-acid biosynthesis; L-lysine biosynthesis via DAP pathway; LL-2,6-diaminopimelate from (S)-tetrahydrodipicolinate (succinylase route): step 3/3. Functionally, catalyzes the hydrolysis of N-succinyl-L,L-diaminopimelic acid (SDAP), forming succinate and LL-2,6-diaminopimelate (DAP), an intermediate involved in the bacterial biosynthesis of lysine and meso-diaminopimelic acid, an essential component of bacterial cell walls. In Nautilia profundicola (strain ATCC BAA-1463 / DSM 18972 / AmH), this protein is Succinyl-diaminopimelate desuccinylase.